The sequence spans 427 residues: Inward rectifier potassium channel 2 (427 aa).

The Cytoplasmic segment spans residues 1–81; the sequence is MGSVRTNRYS…IFTTCVDIRW (81 aa). S-nitrosocysteine is present on Cys-76. A helical transmembrane segment spans residues 82–106; it reads RWMLVIFCLAFVLSWLFFGCVFWLI. Residues 107–128 are Extracellular-facing; sequence ALLHGDLDASKESKACVSEVNS. An intramembrane region (helical; Pore-forming) is located at residues 129-140; sequence FTAAFLFSIETQ. Residues 141–147 constitute an intramembrane region (pore-forming); the sequence is TTIGYGF. The short motif at 142–147 is the Selectivity filter element; it reads TIGYGF. Residues 148–156 are Extracellular-facing; sequence RCVTDECPI. A helical transmembrane segment spans residues 157–178; sequence AVFMVVFQSIVGCIIDAFIIGA. Residues 179-427 lie on the Cytoplasmic side of the membrane; that stretch reads VMAKMAKPKK…PRPLRRESEI (249 aa). Residues 181-208 are polyphosphoinositide (PIP2)-binding; sequence AKMAKPKKRNETLVFSHNAVIAMRDGKL. The disordered stretch occupies residues 384-427; the sequence is SKEEDDSENGVPESTSTDTPPDIDLHNQASVPLEPRPLRRESEI. Positions 425–427 match the PDZ-binding motif; sequence SEI.

This sequence belongs to the inward rectifier-type potassium channel (TC 1.A.2.1) family. KCNJ2 subfamily. In terms of assembly, homotetramer. Homomultimeric and heteromultimeric association with KCNJ4/Kir2.3. Can form heteromeric channels with Kir2.6/KCNJ18. Associates, via its PDZ-recognition domain, with a complex containing LIN7A, LIN7B, LIN7C, DLG1, CASK and APBA1. Post-translationally, S-nitrosylation increases the open probability and inward rectifying currents.

The protein localises to the cell membrane. Its subcellular location is the sarcolemma. It localises to the T-tubule. The enzyme catalyses K(+)(in) = K(+)(out). With respect to regulation, activated by phosphatidylinositol 4,5 biphosphate (PtdIns(4,5)P2). Inward rectifier potassium channels are characterized by a greater tendency to allow potassium to flow into the cell rather than out of it. Their voltage dependence is regulated by the concentration of extracellular potassium; as external potassium is raised, the voltage range of the channel opening shifts to more positive voltages. The inward rectification is mainly due to the blockage of outward current by internal magnesium. Blocked by external barium or cesium. Probably participates in establishing action potential waveform and excitability of neuronal and muscle tissues. The chain is Inward rectifier potassium channel 2 (KCNJ2) from Cavia porcellus (Guinea pig).